Consider the following 154-residue polypeptide: Nuclear cap-binding protein subunit 2 (154 aa).

Residues tyrosine 10, tyrosine 33, 102–106 (RVDWD), 113–117 (RQYGR), and 123–124 (QV) contribute to the mRNA site. Residues 30 to 108 (CTLYVGNLSF…RLIRVDWDAG (79 aa)) form the RRM domain.

The protein belongs to the RRM NCBP2 family. As to quaternary structure, component of the nuclear cap-binding complex (CBC), a heterodimer composed of Cbp80 and Cbp20 that interacts with m7GpppG-capped RNA. Interacts with Ars2.

Its subcellular location is the nucleus. Component of the cap-binding complex (CBC), which binds co-transcriptionally to the 5' cap of pre-mRNAs and is involved in various processes such as pre-mRNA splicing and RNA-mediated gene silencing (RNAi). The CBC complex is involved in miRNA-mediated RNA interference via its interaction with Ars2 and is required for primary microRNAs (miRNAs) processing. Also involved in innate immunity via the short interfering RNAs (siRNAs) processing machinery by restricting the viral RNA production. In the CBC complex, Cbp20 recognizes and binds capped RNAs (m7GpppG-capped RNA) but requires Cbp80 to stabilize the movement of its N-terminal loop and lock the CBC into a high affinity cap-binding state with the cap structure. The protein is Nuclear cap-binding protein subunit 2 (Cbp20) of Drosophila erecta (Fruit fly).